We begin with the raw amino-acid sequence, 281 residues long: 4-diphosphocytidyl-2-C-methyl-D-erythritol kinase (281 aa).

Catalysis depends on residues Lys-11 and Asp-138.

The protein belongs to the GHMP kinase family. IspE subfamily.

It carries out the reaction 4-CDP-2-C-methyl-D-erythritol + ATP = 4-CDP-2-C-methyl-D-erythritol 2-phosphate + ADP + H(+). The protein operates within isoprenoid biosynthesis; isopentenyl diphosphate biosynthesis via DXP pathway; isopentenyl diphosphate from 1-deoxy-D-xylulose 5-phosphate: step 3/6. Functionally, catalyzes the phosphorylation of the position 2 hydroxy group of 4-diphosphocytidyl-2C-methyl-D-erythritol. The sequence is that of 4-diphosphocytidyl-2-C-methyl-D-erythritol kinase from Pelagibacter ubique (strain HTCC1062).